The chain runs to 548 residues: GLC7-interacting protein 2 (548 aa).

The segment covering 1 to 23 (MYIKAEQKPQQFERKNEKLDRNK) has biased composition (basic and acidic residues). 2 disordered regions span residues 1-54 (MYIK…STEE) and 118-143 (VESL…STVP). Ser51 is modified (phosphoserine). Thr52 carries the post-translational modification Phosphothreonine. Phosphoserine is present on Ser155. Residues 191–212 (RSKSLPTTPGIRSGNGVQARDG) form a disordered region. 2 positions are modified to phosphoserine: Ser221 and Ser238. The tract at residues 293 to 346 (FAHPAKISNPNNGKGTNNTKLRKSKRFQNLLKNRTDMPPSKSNKKFVNGGGAHE) is disordered. Residues 419-534 (HNGNDCNGVA…NNNGNNYKVD (116 aa)) enclose the CBM21 domain.

Interacts with phosphatase 1 (GLC7).

The protein is GLC7-interacting protein 2 (GIP2) of Saccharomyces cerevisiae (strain ATCC 204508 / S288c) (Baker's yeast).